The primary structure comprises 219 residues: Protein GrpE (219 aa).

Disordered stretches follow at residues 1 to 32 (MSTT…LDAT) and 59 to 87 (FDGV…AERT).

This sequence belongs to the GrpE family. Homodimer.

Its subcellular location is the cytoplasm. In terms of biological role, participates actively in the response to hyperosmotic and heat shock by preventing the aggregation of stress-denatured proteins, in association with DnaK and GrpE. It is the nucleotide exchange factor for DnaK and may function as a thermosensor. Unfolded proteins bind initially to DnaJ; upon interaction with the DnaJ-bound protein, DnaK hydrolyzes its bound ATP, resulting in the formation of a stable complex. GrpE releases ADP from DnaK; ATP binding to DnaK triggers the release of the substrate protein, thus completing the reaction cycle. Several rounds of ATP-dependent interactions between DnaJ, DnaK and GrpE are required for fully efficient folding. In Corynebacterium diphtheriae (strain ATCC 700971 / NCTC 13129 / Biotype gravis), this protein is Protein GrpE.